A 322-amino-acid polypeptide reads, in one-letter code: Lipoyl synthase (322 aa).

[4Fe-4S] cluster-binding residues include cysteine 68, cysteine 73, cysteine 79, cysteine 94, cysteine 98, cysteine 101, and serine 309. Residues 80 to 298 (FNHGTASFMI…RVAGVEMGFS (219 aa)) enclose the Radical SAM core domain.

It belongs to the radical SAM superfamily. Lipoyl synthase family. [4Fe-4S] cluster serves as cofactor.

Its subcellular location is the cytoplasm. It carries out the reaction [[Fe-S] cluster scaffold protein carrying a second [4Fe-4S](2+) cluster] + N(6)-octanoyl-L-lysyl-[protein] + 2 oxidized [2Fe-2S]-[ferredoxin] + 2 S-adenosyl-L-methionine + 4 H(+) = [[Fe-S] cluster scaffold protein] + N(6)-[(R)-dihydrolipoyl]-L-lysyl-[protein] + 4 Fe(3+) + 2 hydrogen sulfide + 2 5'-deoxyadenosine + 2 L-methionine + 2 reduced [2Fe-2S]-[ferredoxin]. Its pathway is protein modification; protein lipoylation via endogenous pathway; protein N(6)-(lipoyl)lysine from octanoyl-[acyl-carrier-protein]: step 2/2. In terms of biological role, catalyzes the radical-mediated insertion of two sulfur atoms into the C-6 and C-8 positions of the octanoyl moiety bound to the lipoyl domains of lipoate-dependent enzymes, thereby converting the octanoylated domains into lipoylated derivatives. The chain is Lipoyl synthase from Idiomarina loihiensis (strain ATCC BAA-735 / DSM 15497 / L2-TR).